The chain runs to 253 residues: Proteasome subunit alpha type-7 (253 aa).

Belongs to the peptidase T1A family. In terms of assembly, the 26S proteasome consists of a 20S proteasome core and two 19S regulatory subunits. The 20S proteasome core is composed of 28 subunits that are arranged in four stacked rings, resulting in a barrel-shaped structure. The two end rings are each formed by seven alpha subunits, and the two central rings are each formed by seven beta subunits. The catalytic chamber with the active sites is on the inside of the barrel.

The protein resides in the cytoplasm. Its subcellular location is the nucleus. Its function is as follows. The proteasome is a multicatalytic proteinase complex which is characterized by its ability to cleave peptides with Arg, Phe, Tyr, Leu, and Glu adjacent to the leaving group at neutral or slightly basic pH. The proteasome has an ATP-dependent proteolytic activity. The sequence is that of Proteasome subunit alpha type-7 (pas-4) from Caenorhabditis elegans.